A 1431-amino-acid chain; its full sequence is Protein CFT1 (1431 aa).

The segment at 721 to 759 (EPSKSESSEPISHQIDSENKPNITNGINGTTARSARQTQ) is disordered. Residues 740–759 (KPNITNGINGTTARSARQTQ) are compositionally biased toward polar residues.

Belongs to the CFT1 family.

It is found in the nucleus. In terms of biological role, RNA-binding component of the cleavage and polyadenylation factor (CPF) complex, which plays a key role in polyadenylation-dependent pre-mRNA 3'-end formation and cooperates with cleavage factors including the CFIA complex and NAB4/CFIB. Involved in poly(A) site recognition. May be involved in coupling transcription termination and mRNA 3'-end formation. This chain is Protein CFT1 (CFT1), found in Cryptococcus neoformans var. neoformans serotype D (strain B-3501A) (Filobasidiella neoformans).